Reading from the N-terminus, the 203-residue chain is Small ribosomal subunit protein uS4 (203 aa).

In terms of domain architecture, S4 RNA-binding spans Leu93–Leu158.

It belongs to the universal ribosomal protein uS4 family. As to quaternary structure, part of the 30S ribosomal subunit. Contacts protein S5. The interaction surface between S4 and S5 is involved in control of translational fidelity.

In terms of biological role, one of the primary rRNA binding proteins, it binds directly to 16S rRNA where it nucleates assembly of the body of the 30S subunit. With S5 and S12 plays an important role in translational accuracy. This chain is Small ribosomal subunit protein uS4, found in Akkermansia muciniphila (strain ATCC BAA-835 / DSM 22959 / JCM 33894 / BCRC 81048 / CCUG 64013 / CIP 107961 / Muc).